A 711-amino-acid polypeptide reads, in one-letter code: Early transcription factor 82 kDa subunit (711 aa).

Belongs to the poxviridae VETF large subunit family. Heterodimer of a 70 kDa and a 82 kDa subunit. Part of the early transcription complex composed of ETF, RAP94, and the DNA-directed RNA polymerase.

Its function is as follows. Acts with RNA polymerase to initiate transcription from early gene promoters. Is recruited by the RPO-associated protein of 94 kDa (RAP94) to form the early transcription complex, which also contains the core RNA polymerase. ETF heterodimer binds to early gene promoters. The protein is Early transcription factor 82 kDa subunit (VETFL) of Oryctolagus cuniculus (Rabbit).